A 649-amino-acid polypeptide reads, in one-letter code: Acetyl-coenzyme A synthetase (649 aa).

CoA is bound by residues 191–194 (RAGR), Thr311, and Asn335. Residues 387 to 389 (GEP), 411 to 416 (DTWWQT), Asp500, and Arg515 each bind ATP. Residue Ser523 coordinates CoA. Arg526 contacts ATP. Residues Val537, Phe539, and Ile542 each coordinate Mg(2+). CoA is bound at residue Arg584. An N6-acetyllysine modification is found at Lys609.

The protein belongs to the ATP-dependent AMP-binding enzyme family. Requires Mg(2+) as cofactor. Acetylated. Deacetylation by the SIR2-homolog deacetylase activates the enzyme.

It catalyses the reaction acetate + ATP + CoA = acetyl-CoA + AMP + diphosphate. In terms of biological role, catalyzes the conversion of acetate into acetyl-CoA (AcCoA), an essential intermediate at the junction of anabolic and catabolic pathways. AcsA undergoes a two-step reaction. In the first half reaction, AcsA combines acetate with ATP to form acetyl-adenylate (AcAMP) intermediate. In the second half reaction, it can then transfer the acetyl group from AcAMP to the sulfhydryl group of CoA, forming the product AcCoA. The protein is Acetyl-coenzyme A synthetase of Photobacterium profundum (strain SS9).